The sequence spans 60 residues: Large ribosomal subunit protein uL30 (60 aa).

The protein belongs to the universal ribosomal protein uL30 family. As to quaternary structure, part of the 50S ribosomal subunit.

In Shewanella baltica (strain OS223), this protein is Large ribosomal subunit protein uL30.